We begin with the raw amino-acid sequence, 241 residues long: Phosphoribosyl isomerase A (241 aa).

Asp11 functions as the Proton acceptor in the catalytic mechanism. Residue Asp130 is the Proton donor of the active site.

This sequence belongs to the HisA/HisF family.

The protein localises to the cytoplasm. It carries out the reaction 1-(5-phospho-beta-D-ribosyl)-5-[(5-phospho-beta-D-ribosylamino)methylideneamino]imidazole-4-carboxamide = 5-[(5-phospho-1-deoxy-D-ribulos-1-ylimino)methylamino]-1-(5-phospho-beta-D-ribosyl)imidazole-4-carboxamide. The enzyme catalyses N-(5-phospho-beta-D-ribosyl)anthranilate = 1-(2-carboxyphenylamino)-1-deoxy-D-ribulose 5-phosphate. Its pathway is amino-acid biosynthesis; L-histidine biosynthesis; L-histidine from 5-phospho-alpha-D-ribose 1-diphosphate: step 4/9. It functions in the pathway amino-acid biosynthesis; L-tryptophan biosynthesis; L-tryptophan from chorismate: step 3/5. Its function is as follows. Involved in both the histidine and tryptophan biosynthetic pathways. This chain is Phosphoribosyl isomerase A, found in Streptomyces griseus subsp. griseus (strain JCM 4626 / CBS 651.72 / NBRC 13350 / KCC S-0626 / ISP 5235).